The following is a 66-amino-acid chain: Conotoxin Cal5.2 (66 aa).

The signal sequence occupies residues 1-20 (MMYCLPVVCILLLLIPSSAT). A propeptide spanning residues 21 to 51 (FVVESRLEKDQAQSFTGDAWKRVSPIHEMIQ) is cleaved from the precursor. Valine 65 is subject to Valine amide.

Belongs to the conotoxin T superfamily. Contains 2 disulfide bonds that can be either 'C1-C3, C2-C4' or 'C1-C4, C2-C3', since these disulfide connectivities have been observed for conotoxins with cysteine framework V (for examples, see AC P0DQQ7 and AC P81755). In terms of tissue distribution, expressed by the venom duct.

The protein resides in the secreted. In terms of biological role, probable neurotoxin with unknown target. Possibly targets ion channels. The chain is Conotoxin Cal5.2 from Californiconus californicus (California cone).